We begin with the raw amino-acid sequence, 1503 residues long: Dynein axonemal assembly factor 1 homolog (1503 aa).

LRR repeat units follow at residues 34–56 (RLND…EEYT), 57–78 (ELKC…EKLG), 79–100 (KLKC…DPCR), 101–122 (ELDT…GTNI), 125–146 (VLNT…SDLI), and 150–171 (TLSV…KIFE). The LRRCT domain maps to 185-223 (PVVSRLPQYRKTLILACKELTYLDSRPVFPRDRACAEAW). Disordered regions lie at residues 249–280 (SINC…DDTC), 305–328 (EQPI…TSSQ), 956–1033 (DSGD…DHDE), and 1295–1315 (STNN…STSE). Over residues 973–985 (TESEDYDTAEDEY) the composition is skewed to acidic residues. Basic and acidic residues predominate over residues 1014 to 1031 (QKQDKPDTVEEVGKKNDH). A compositionally biased stretch (low complexity) spans 1303–1314 (TKKTLPTKTSTS).

The protein belongs to the DNAAF1 family.

Its subcellular location is the cell projection. It is found in the cilium. Cilium-specific protein required for cilia structures. This chain is Dynein axonemal assembly factor 1 homolog (dtr), found in Drosophila erecta (Fruit fly).